The chain runs to 80 residues: MITMKMFLFLNEACIFIDSVCEGIVFWGLCLFVCAECENASYRGAEVPYKTLFRSCDTSIFGVAECLNLVAIDPRSEAYC.

Residues 13-33 (ACIFIDSVCEGIVFWGLCLFV) form a helical membrane-spanning segment.

It belongs to the UPF0377 family.

It is found in the membrane. This chain is Putative UPF0377 protein YMR324C, found in Saccharomyces cerevisiae (strain ATCC 204508 / S288c) (Baker's yeast).